We begin with the raw amino-acid sequence, 488 residues long: Diacylglycerol kinase 3 (488 aa).

The tract at residues 1-24 (MDSPVSKTDASKEKFVASRPSTAD) is disordered. Positions 87-245 (APHAPMVVFI…SWKILVSMPS (159 aa)) constitute a DAGKc domain.

The protein belongs to the eukaryotic diacylglycerol kinase family. In terms of assembly, monomer.

The enzyme catalyses a 1,2-diacyl-sn-glycerol + ATP = a 1,2-diacyl-sn-glycero-3-phosphate + ADP + H(+). Phosphorylates the second messenger diacylglycerol (DAG) to generate phosphatidic acid (PA), another important signaling molecule. PA is required for plant development and responses to abiotic stress and pathogen attack. May be involved in the accumulation of PA during cold stress. The chain is Diacylglycerol kinase 3 (DGK3) from Arabidopsis thaliana (Mouse-ear cress).